A 147-amino-acid polypeptide reads, in one-letter code: D-aminoacyl-tRNA deacylase (147 aa).

The short motif at 136-137 (GP) is the Gly-cisPro motif, important for rejection of L-amino acids element.

The protein belongs to the DTD family. Homodimer.

Its subcellular location is the cytoplasm. The enzyme catalyses glycyl-tRNA(Ala) + H2O = tRNA(Ala) + glycine + H(+). It carries out the reaction a D-aminoacyl-tRNA + H2O = a tRNA + a D-alpha-amino acid + H(+). Its function is as follows. An aminoacyl-tRNA editing enzyme that deacylates mischarged D-aminoacyl-tRNAs. Also deacylates mischarged glycyl-tRNA(Ala), protecting cells against glycine mischarging by AlaRS. Acts via tRNA-based rather than protein-based catalysis; rejects L-amino acids rather than detecting D-amino acids in the active site. By recycling D-aminoacyl-tRNA to D-amino acids and free tRNA molecules, this enzyme counteracts the toxicity associated with the formation of D-aminoacyl-tRNA entities in vivo and helps enforce protein L-homochirality. The polypeptide is D-aminoacyl-tRNA deacylase (Streptococcus thermophilus (strain CNRZ 1066)).